The chain runs to 290 residues: Putative heme oxygenase 3 (290 aa).

The segment covering 1-12 has biased composition (acidic residues); it reads MSSEVETAEAVD. Residues 1 to 33 form a disordered region; it reads MSSEVETAEAVDESEKNSMASEKENHSKIADFS. Residues 13-33 are compositionally biased toward basic and acidic residues; it reads ESEKNSMASEKENHSKIADFS. 2 HRM repeats span residues 238-243 and 255-260; these read KCPFNA and NCPFQM.

It belongs to the heme oxygenase family. As to expression, found in the spleen, liver, thymus, prostate, heart, kidney, brain and testis.

The enzyme catalyses heme b + 3 reduced [NADPH--hemoprotein reductase] + 3 O2 = biliverdin IXalpha + CO + Fe(2+) + 3 oxidized [NADPH--hemoprotein reductase] + 3 H2O + H(+). Functionally, heme oxygenase cleaves the heme ring at the alpha methene bridge to form biliverdin. Biliverdin is subsequently converted to bilirubin by biliverdin reductase. Heme oxygenase 3 could be implicated in some heme-dependent regulatory role in the cell. In Rattus norvegicus (Rat), this protein is Putative heme oxygenase 3 (Hmox3).